The primary structure comprises 400 residues: Acetate kinase (400 aa).

Asparagine 10 provides a ligand contact to Mg(2+). Lysine 17 contacts ATP. Arginine 91 is a binding site for substrate. The Proton donor/acceptor role is filled by aspartate 150. ATP contacts are provided by residues 210–214 (HLGNG), 285–287 (DCR), and 333–337 (GIGEN). Glutamate 387 is a binding site for Mg(2+).

This sequence belongs to the acetokinase family. In terms of assembly, homodimer. Mg(2+) serves as cofactor. Mn(2+) is required as a cofactor.

The protein localises to the cytoplasm. It carries out the reaction acetate + ATP = acetyl phosphate + ADP. The protein operates within metabolic intermediate biosynthesis; acetyl-CoA biosynthesis; acetyl-CoA from acetate: step 1/2. Catalyzes the formation of acetyl phosphate from acetate and ATP. Can also catalyze the reverse reaction. In Yersinia pseudotuberculosis serotype IB (strain PB1/+), this protein is Acetate kinase.